A 362-amino-acid chain; its full sequence is MNGDRRDPTSPPRLLVAASGTGGHIFPALAVVEQLPTWQIEWLGVPQRLEAKLVPDRYPLHRVAMSGWQGSPWQKLGSLVQLARATLQVRQILASGQFDVVLTTGGYIAAPTILAARSLGVPVLLHESNCLPGKVTRWLGRFCRLVALGMAETAEHLPGAVTRVVGTPVRAEFYQPQPLPADLPIPEGDPLIVVMGGSQGARGLNRLVAACAPAWLEAGAWIVHLTGGSEVGIPSHPRYRAFPFRADVAALLQRATFAISRAGALSLAELWATATPAILIPYPFAAEDHQYHNALAFVGRGGGVVMRESEANLDLLRQTALAWLAQPQVVAQMAANLKATAPPAASKAVARLLQEICRDSAR.

Residues 21 to 23 (TGG), Asn129, Arg170, Ser198, and Gln290 contribute to the UDP-N-acetyl-alpha-D-glucosamine site.

Belongs to the glycosyltransferase 28 family. MurG subfamily.

The protein localises to the cell inner membrane. The catalysed reaction is di-trans,octa-cis-undecaprenyl diphospho-N-acetyl-alpha-D-muramoyl-L-alanyl-D-glutamyl-meso-2,6-diaminopimeloyl-D-alanyl-D-alanine + UDP-N-acetyl-alpha-D-glucosamine = di-trans,octa-cis-undecaprenyl diphospho-[N-acetyl-alpha-D-glucosaminyl-(1-&gt;4)]-N-acetyl-alpha-D-muramoyl-L-alanyl-D-glutamyl-meso-2,6-diaminopimeloyl-D-alanyl-D-alanine + UDP + H(+). Its pathway is cell wall biogenesis; peptidoglycan biosynthesis. Functionally, cell wall formation. Catalyzes the transfer of a GlcNAc subunit on undecaprenyl-pyrophosphoryl-MurNAc-pentapeptide (lipid intermediate I) to form undecaprenyl-pyrophosphoryl-MurNAc-(pentapeptide)GlcNAc (lipid intermediate II). The sequence is that of UDP-N-acetylglucosamine--N-acetylmuramyl-(pentapeptide) pyrophosphoryl-undecaprenol N-acetylglucosamine transferase from Synechococcus sp. (strain JA-3-3Ab) (Cyanobacteria bacterium Yellowstone A-Prime).